A 206-amino-acid chain; its full sequence is Transcriptional regulator GfcR (206 aa).

Belongs to the purine/pyrimidine phosphoribosyltransferase family. GfcR subfamily.

The chain is Transcriptional regulator GfcR from Methanosphaerula palustris (strain ATCC BAA-1556 / DSM 19958 / E1-9c).